A 361-amino-acid polypeptide reads, in one-letter code: Homocitrate synthase (361 aa).

The Pyruvate carboxyltransferase domain occupies 1-251; sequence MVLDSTLREG…KYRLDLLYRV (251 aa). Residue R8 coordinates 2-oxoglutarate. Position 9 (E9) interacts with Mg(2+). Residues H68, R128, and T162 each coordinate 2-oxoglutarate. 2 residues coordinate Mg(2+): H188 and H190. The active-site Proton acceptor is the H282.

It belongs to the alpha-IPM synthase/homocitrate synthase family. Homocitrate synthase LYS20/LYS21 subfamily. Mg(2+) serves as cofactor. It depends on Mn(2+) as a cofactor.

The enzyme catalyses acetyl-CoA + 2-oxoglutarate + H2O = (2R)-homocitrate + CoA + H(+). The protein operates within amino-acid biosynthesis; L-lysine biosynthesis via AAA pathway; L-alpha-aminoadipate from 2-oxoglutarate: step 1/5. Functionally, catalyzes the aldol-type condensation of 2-oxoglutarate with acetyl-CoA to yield homocitrate. Carries out the first step of the alpha-aminoadipate (AAA) lysine biosynthesis pathway. This Pyrococcus abyssi (strain GE5 / Orsay) protein is Homocitrate synthase.